The chain runs to 289 residues: ATP synthase subunit a (289 aa).

The next 6 membrane-spanning stretches (helical) occupy residues 43–63, 101–121, 160–180, 193–213, 232–252, and 259–279; these read AFHVDTLGWSVALGLIFVLIF, SAVIAPLALTIFVWVFLMNAV, LSVFALIIFYSIKVKGIGGFI, LFVQALLIPVNFLLEFVTLIA, VFILIAVMFGSGLLWLSGLGV, and AVFHILIITLQAFIFMMLTIV.

It belongs to the ATPase A chain family. F-type ATPases have 2 components, CF(1) - the catalytic core - and CF(0) - the membrane proton channel. CF(1) has five subunits: alpha(3), beta(3), gamma(1), delta(1), epsilon(1). CF(0) has three main subunits: a(1), b(2) and c(9-12). The alpha and beta chains form an alternating ring which encloses part of the gamma chain. CF(1) is attached to CF(0) by a central stalk formed by the gamma and epsilon chains, while a peripheral stalk is formed by the delta and b chains.

The protein localises to the cell inner membrane. Its function is as follows. Key component of the proton channel; it plays a direct role in the translocation of protons across the membrane. The polypeptide is ATP synthase subunit a (Pseudomonas syringae pv. syringae (strain B728a)).